Reading from the N-terminus, the 152-residue chain is S-ribosylhomocysteine lyase (152 aa).

His-53, His-57, and Cys-120 together coordinate Fe cation.

It belongs to the LuxS family. Homodimer. The cofactor is Fe cation.

It carries out the reaction S-(5-deoxy-D-ribos-5-yl)-L-homocysteine = (S)-4,5-dihydroxypentane-2,3-dione + L-homocysteine. Involved in the synthesis of autoinducer 2 (AI-2) which is secreted by bacteria and is used to communicate both the cell density and the metabolic potential of the environment. The regulation of gene expression in response to changes in cell density is called quorum sensing. Catalyzes the transformation of S-ribosylhomocysteine (RHC) to homocysteine (HC) and 4,5-dihydroxy-2,3-pentadione (DPD). This chain is S-ribosylhomocysteine lyase, found in Enterococcus faecalis (strain ATCC 700802 / V583).